The sequence spans 380 residues: Chaperone protein DnaJ (380 aa).

Residues 5-69 (DYYEILGVSK…QKRAHYDQFG (65 aa)) enclose the J domain. The CR-type zinc-finger motif lies at 135–217 (GKETDIEIPR…CGGTGRVKKR (83 aa)). Cys-148, Cys-151, Cys-165, Cys-168, Cys-191, Cys-194, Cys-205, and Cys-208 together coordinate Zn(2+). 4 CXXCXGXG motif repeats span residues 148–155 (CDTCHGTG), 165–172 (CSYCHGTG), 191–198 (CPYCGGTG), and 205–212 (CTTCGGTG).

It belongs to the DnaJ family. In terms of assembly, homodimer. Requires Zn(2+) as cofactor.

It localises to the cytoplasm. In terms of biological role, participates actively in the response to hyperosmotic and heat shock by preventing the aggregation of stress-denatured proteins and by disaggregating proteins, also in an autonomous, DnaK-independent fashion. Unfolded proteins bind initially to DnaJ; upon interaction with the DnaJ-bound protein, DnaK hydrolyzes its bound ATP, resulting in the formation of a stable complex. GrpE releases ADP from DnaK; ATP binding to DnaK triggers the release of the substrate protein, thus completing the reaction cycle. Several rounds of ATP-dependent interactions between DnaJ, DnaK and GrpE are required for fully efficient folding. Also involved, together with DnaK and GrpE, in the DNA replication of plasmids through activation of initiation proteins. This Geobacillus sp. (strain WCH70) protein is Chaperone protein DnaJ.